A 365-amino-acid chain; its full sequence is tRNA N6-adenosine threonylcarbamoyltransferase (365 aa).

The Fe cation site is built by His-119 and His-123. Substrate contacts are provided by residues 141-145 (LVSGG), Asp-174, Gly-187, and Asn-288. Asp-316 contributes to the Fe cation binding site.

Belongs to the KAE1 / TsaD family. Requires Fe(2+) as cofactor.

The protein localises to the cytoplasm. It carries out the reaction L-threonylcarbamoyladenylate + adenosine(37) in tRNA = N(6)-L-threonylcarbamoyladenosine(37) in tRNA + AMP + H(+). In terms of biological role, required for the formation of a threonylcarbamoyl group on adenosine at position 37 (t(6)A37) in tRNAs that read codons beginning with adenine. Is involved in the transfer of the threonylcarbamoyl moiety of threonylcarbamoyl-AMP (TC-AMP) to the N6 group of A37, together with TsaE and TsaB. TsaD likely plays a direct catalytic role in this reaction. The chain is tRNA N6-adenosine threonylcarbamoyltransferase from Rhizobium etli (strain ATCC 51251 / DSM 11541 / JCM 21823 / NBRC 15573 / CFN 42).